Consider the following 445-residue polypeptide: Cyclic GMP-AMP phosphodiesterase SMPDL3A (445 aa).

The signal sequence occupies residues 1-22 (MALLGNFLCCLLVAWLCGPGLG). Residues D42 and H44 each contribute to the Zn(2+) site. C59 and C78 form a disulfide bridge. N66 carries N-linked (GlcNAc...) asparagine glycosylation. D107 lines the Zn(2+) pocket. Residue H111 coordinates ATP. N128 carries N-linked (GlcNAc...) asparagine glycosylation. N148 contributes to the Zn(2+) binding site. Residues N148 and H149 each coordinate ATP. N-linked (GlcNAc...) asparagine glycosylation is found at N219 and N235. Residue H249 participates in Zn(2+) binding. Y257 is an ATP binding site. Positions 290 and 292 each coordinate Zn(2+). 2 N-linked (GlcNAc...) asparagine glycosylation sites follow: N353 and N364. Intrachain disulfides connect C417/C421 and C427/C440.

The protein belongs to the acid sphingomyelinase family. Monomer. Homodimer; homodimerizes following 2',3'-cGAMP-binding. Requires Zn(2+) as cofactor. N-glycosylated. In terms of tissue distribution, detected in blood serum (at protein level).

The protein localises to the secreted. The catalysed reaction is 2',3'-cGAMP + H2O = 5'-pGpA(2'-5') + H(+). The enzyme catalyses 5'-pGpA(2'-5') + H2O = 5'-GpA(2'-5') + phosphate. It catalyses the reaction a ribonucleoside 5'-triphosphate + H2O = a ribonucleoside 5'-diphosphate + phosphate + H(+). It carries out the reaction ATP + H2O = ADP + phosphate + H(+). Its activity is regulated as follows. Requires micromolar levels of Zn(2+) for activity. Inhibited by millimolar levels of Zn(2+). In terms of biological role, cyclic-nucleotide phosphodiesterase that acts as a negative regulator of innate immunity by mediating degradation of 2',3'-cGAMP, thereby inhibiting the cGAS-STING signaling. Specifically linearizes 2',3'-cGAMP into 2'5'-bond pGpA and further hydrolyzes pGpA to produce GpA. Also has in vitro nucleotide phosphodiesterase activity with nucleoside triphosphates, such as ATP. Has in vitro activity with p-nitrophenyl-TMP. Has lower activity with nucleoside diphosphates, and no activity with nucleoside monophosphates. Has in vitro activity with CDP-choline, giving rise to CMP and phosphocholine. Has in vitro activity with CDP-ethanolamine. Does not have sphingomyelin phosphodiesterase activity. The protein is Cyclic GMP-AMP phosphodiesterase SMPDL3A of Mus musculus (Mouse).